The primary structure comprises 66 residues: Large ribosomal subunit protein bL31 (66 aa).

Residues Cys-16, Cys-18, Cys-36, and Cys-39 each coordinate Zn(2+).

It belongs to the bacterial ribosomal protein bL31 family. Type A subfamily. Part of the 50S ribosomal subunit. Requires Zn(2+) as cofactor.

Functionally, binds the 23S rRNA. The polypeptide is Large ribosomal subunit protein bL31 (Nitratiruptor sp. (strain SB155-2)).